The chain runs to 294 residues: uncharacterized protein (294 aa).

Positions 1–32 (MSHLKDPTTQYYTGEYPKQKQPTPGIQAKMTP) are disordered. Position 39 is an N6-acetyllysine (K39). 53–77 (LVTGGDSGIGRAAAIAYAREGADVA) serves as a coordination point for NADP(+). S186 provides a ligand contact to substrate. Catalysis depends on Y199, which acts as the Proton acceptor.

Belongs to the short-chain dehydrogenases/reductases (SDR) family.

This is an uncharacterized protein from Escherichia coli (strain K12).